The following is a 408-amino-acid chain: S-adenosylmethionine synthase (408 aa).

Residue histidine 15 coordinates ATP. Aspartate 17 lines the Mg(2+) pocket. Glutamate 43 contacts K(+). L-methionine-binding residues include glutamate 56 and glutamine 100. The flexible loop stretch occupies residues 100–110 (QSPDIAQGVNE). Residues 171–173 (DGK), 248–249 (KF), aspartate 257, 263–264 (RK), alanine 280, and lysine 284 each bind ATP. An L-methionine-binding site is contributed by aspartate 257. Position 288 (lysine 288) interacts with L-methionine.

This sequence belongs to the AdoMet synthase family. Homotetramer; dimer of dimers. It depends on Mg(2+) as a cofactor. Requires K(+) as cofactor.

The protein localises to the cytoplasm. The enzyme catalyses L-methionine + ATP + H2O = S-adenosyl-L-methionine + phosphate + diphosphate. It functions in the pathway amino-acid biosynthesis; S-adenosyl-L-methionine biosynthesis; S-adenosyl-L-methionine from L-methionine: step 1/1. Catalyzes the formation of S-adenosylmethionine (AdoMet) from methionine and ATP. The overall synthetic reaction is composed of two sequential steps, AdoMet formation and the subsequent tripolyphosphate hydrolysis which occurs prior to release of AdoMet from the enzyme. In Synechococcus sp. (strain CC9902), this protein is S-adenosylmethionine synthase.